Reading from the N-terminus, the 274-residue chain is Siroheme biosynthesis protein MET8 (274 aa).

NAD(+)-binding positions include Glu23 to Val24, Ser43 to Asp45, and Phe93. Catalysis depends on Asp141, which acts as the Proton acceptor.

The protein belongs to the precorrin-2 dehydrogenase / sirohydrochlorin ferrochelatase family. MET8 subfamily. As to quaternary structure, homodimer.

The catalysed reaction is precorrin-2 + NAD(+) = sirohydrochlorin + NADH + 2 H(+). It catalyses the reaction siroheme + 2 H(+) = sirohydrochlorin + Fe(2+). It participates in porphyrin-containing compound metabolism; siroheme biosynthesis; siroheme from sirohydrochlorin: step 1/1. The protein operates within porphyrin-containing compound metabolism; siroheme biosynthesis; sirohydrochlorin from precorrin-2: step 1/1. In terms of biological role, catalyzes the conversion of precorrin-2 into siroheme. This reaction consist of the NAD-dependent oxidation of precorrin-2 into sirohydrochlorin and its subsequent ferrochelation into siroheme. The protein is Siroheme biosynthesis protein MET8 of Saccharomyces cerevisiae (strain ATCC 204508 / S288c) (Baker's yeast).